The primary structure comprises 94 residues: UPF0768 protein YBL029C-A (94 aa).

It belongs to the UPF0768 family.

The protein localises to the cell membrane. The sequence is that of UPF0768 protein YBL029C-A from Saccharomyces cerevisiae (strain ATCC 204508 / S288c) (Baker's yeast).